A 198-amino-acid polypeptide reads, in one-letter code: Inner membrane-spanning protein YciB (198 aa).

Helical transmembrane passes span 36–56 (IYSA…ALFL), 64–84 (GQLL…AFHS), 90–110 (WKAP…HFIG), 135–155 (VAWI…AFTF), and 162–182 (FKVF…GVYL).

It belongs to the YciB family.

It localises to the cell inner membrane. Functionally, plays a role in cell envelope biogenesis, maintenance of cell envelope integrity and membrane homeostasis. In Pseudomonas entomophila (strain L48), this protein is Inner membrane-spanning protein YciB.